The sequence spans 378 residues: Mannitol-1-phosphate 5-dehydrogenase (378 aa).

An NAD(+)-binding site is contributed by 4-15; the sequence is SVHFGAGNIGRG.

This sequence belongs to the mannitol dehydrogenase family.

It catalyses the reaction D-mannitol 1-phosphate + NAD(+) = beta-D-fructose 6-phosphate + NADH + H(+). This chain is Mannitol-1-phosphate 5-dehydrogenase, found in Streptococcus pneumoniae (strain CGSP14).